The sequence spans 614 residues: ATP-dependent zinc metalloprotease FtsH (614 aa).

The Stromal portion of the chain corresponds to 1–7; sequence MKKQWKK. Residues 8 to 28 traverse the membrane as a helical segment; it reads IVLFVLPVIITLITLSSFLFY. Residues 29–116 lie on the Lumenal side of the membrane; the sequence is NQDVVHNWSS…AHPSSSNVNL (88 aa). The helical transmembrane segment at 117–137 threads the bilayer; the sequence is VSWLSNLLLPLILIITLFFFF. The Stromal segment spans residues 138–614; it reads RRGNKSSSGP…EFMRIVEERV (477 aa). 211–218 lines the ATP pocket; that stretch reads GPPGTGKT. Position 432 (His-432) interacts with Zn(2+). Residue Glu-433 is part of the active site. Zn(2+) is bound by residues His-436 and Asp-510.

This sequence in the central section; belongs to the AAA ATPase family. The protein in the C-terminal section; belongs to the peptidase M41 family. In terms of assembly, homohexamer. It depends on Zn(2+) as a cofactor.

It localises to the plastid. It is found in the chloroplast thylakoid membrane. Acts as a processive, ATP-dependent zinc metallopeptidase. The chain is ATP-dependent zinc metalloprotease FtsH from Cyanidium caldarium (Red alga).